A 227-amino-acid polypeptide reads, in one-letter code: Interleukin-6 (227 aa).

The N-terminal stretch at 1–22 is a signal peptide; the sequence is MASISYLLAPLVLAAVLQPTAG. The interval 24-45 is disordered; the sequence is PLDAPTESPAGETSGEEAETGS. Cys93 and Cys103 are oxidised to a cystine.

Belongs to the IL-6 superfamily. In terms of assembly, component of a hexamer of two molecules each of IL6, IL6R and IL6ST; first binds to IL6R to associate with the signaling subunit IL6ST. In terms of tissue distribution, after induction, highly expressed in spleen. Can also be expressed in kidney after incubation with PHA.

It is found in the secreted. In terms of biological role, cytokine with a wide variety of biological functions in immunity, tissue regeneration, and metabolism. Binds to IL6R, then the complex associates to the signaling subunit IL6ST/gp130 to trigger the intracellular IL6-signaling pathway. The interaction with the membrane-bound IL6R and IL6ST stimulates 'classic signaling', whereas the binding of IL6 and soluble IL6R to IL6ST stimulates 'trans-signaling'. Alternatively, 'cluster signaling' occurs when membrane-bound IL6:IL6R complexes on transmitter cells activate IL6ST receptors on neighboring receiver cells. The protein is Interleukin-6 (il6) of Takifugu rubripes (Japanese pufferfish).